A 370-amino-acid polypeptide reads, in one-letter code: Leucine-rich repeat-containing protein 19 (370 aa).

The first 24 residues, 1–24 (MKVTGITILFWPLSMILLSDKIQS), serve as a signal peptide directing secretion. Topologically, residues 25 to 270 (SKREVQCNFT…SEHEPLGKSW (246 aa)) are extracellular. 4 N-linked (GlcNAc...) asparagine glycosylation sites follow: Asn32, Asn37, Asn62, and Asn95. LRR repeat units lie at residues 46-71 (KKDVTILDLSYNQITLNGTDTRVLQT), 72-95 (YFLLTELYLIENKVTILHNNGFGN), 96-119 (LSSLEILNICRNSIYVIQQGAFLG), 120-143 (LNKLKQLYLCQNKIEQLNADVFVP), and 145-168 (RSLKLLNLQGNLISYLDVPPLFHL). Residues 176-227 (NLWNCSCSLFNLQNWLNTSNVTLENENITMCSYPNSLQSYNIKTVPHKAECH) form the LRRCT domain. Residues Asn179, Asn192, Asn195, Asn202, Asn251, and Asn256 are each glycosylated (N-linked (GlcNAc...) asparagine). The helical transmembrane segment at 271–291 (AFLVGVVVTVLTTSLLIFIAI) threads the bilayer. Over 292 to 370 (KCPIWYNILL…IDIHELCEEN (79 aa)) the chain is Cytoplasmic.

Interacts with TRAF2 and TRAF6. As to expression, expressed in renal collecting duct epithelial cells.

The protein resides in the membrane. Activated by TLR ligands such as LPS, bacterial DNA and peptidoglycan. Pathogen-recognition receptor which mediates the activation of TRAF2- and TRAF6 NF-kappa-B signaling pathways and induces the expression of pro-inflammatory cytokines. In kidney, prevents infection by uropathogenic bacteria by inducing the production of cytokines, chemokines and antimicrobial substances. In gut, involved in host-microbiota interactions, plays a critical role in promoting the recruitment of immune cells and intestinal inflammation. The polypeptide is Leucine-rich repeat-containing protein 19 (Homo sapiens (Human)).